A 306-amino-acid chain; its full sequence is MNWITNYVRPKINSILGRREIPENLWIKDPTSGEMVFHKDLEANQYVIPASGHHMHISAKNRLMHFFDDGVYTPIENPKVVTDPLKFRDAKRYIDRLKEYRAKLGVDDNILSARGTIEGLPIIATVQDFAFMGGSLGMASGEAIIEAFHTAIADKCPLVLFAASGGARMQEGTLSLMQMPRTTVAIEMMKEARLPYIVVLTNPTTGGVTASYAMLGDVHIAEPGAMIGFAGPRVIQQTIRETLPEGFQSSEYLLEHGMVDMVVSRLDMKATIAKILRLMMKFPAAPEPSHAFSKDSQTQISKTKAA.

Residues 25-294 (LWIKDPTSGE…APEPSHAFSK (270 aa)) form the CoA carboxyltransferase N-terminal domain. Residues 287–306 (EPSHAFSKDSQTQISKTKAA) are disordered. Positions 294-306 (KDSQTQISKTKAA) are enriched in polar residues.

The protein belongs to the AccD/PCCB family. As to quaternary structure, acetyl-CoA carboxylase is a heterohexamer composed of biotin carboxyl carrier protein (AccB), biotin carboxylase (AccC) and two subunits each of ACCase subunit alpha (AccA) and ACCase subunit beta (AccD).

The protein resides in the cytoplasm. It catalyses the reaction N(6)-carboxybiotinyl-L-lysyl-[protein] + acetyl-CoA = N(6)-biotinyl-L-lysyl-[protein] + malonyl-CoA. It functions in the pathway lipid metabolism; malonyl-CoA biosynthesis; malonyl-CoA from acetyl-CoA: step 1/1. Functionally, component of the acetyl coenzyme A carboxylase (ACC) complex. Biotin carboxylase (BC) catalyzes the carboxylation of biotin on its carrier protein (BCCP) and then the CO(2) group is transferred by the transcarboxylase to acetyl-CoA to form malonyl-CoA. This Bartonella bacilliformis (strain ATCC 35685 / KC583 / Herrer 020/F12,63) protein is Acetyl-coenzyme A carboxylase carboxyl transferase subunit beta.